A 778-amino-acid polypeptide reads, in one-letter code: Preaspterpenacid I synthase sttA (778 aa).

The segment at 4–359 (ISDVMKHCVP…RYHRTDLATT (356 aa)) is sesterterpenoid synthase. Asp105 contacts Mg(2+). Asp105 is a binding site for substrate. The segment at 211–214 (RVNE) is substrate. A substrate-binding site is contributed by Asn255. 2 substrate regions span residues 259-263 (SFPKE) and 350-351 (RY). The segment at 360–774 (AEDRATLIGK…RMMLLGMGPK (415 aa)) is geranylfarneyl diphosphate synthase. The segment at 423–445 (AFKKSNPRNGKQNGTEGSKGTFT) is disordered. A compositionally biased stretch (polar residues) spans 429–445 (PRNGKQNGTEGSKGTFT). 3 residues coordinate isopentenyl diphosphate: Lys493, Arg496, and His525. Mg(2+) contacts are provided by Asp532 and Asp536. Arg541 is a dimethylallyl diphosphate binding site. Arg542 is a binding site for isopentenyl diphosphate. Residues Lys619, Thr620, Gln657, Asn664, and Lys674 each contribute to the dimethylallyl diphosphate site.

In the N-terminal section; belongs to the terpene synthase family. This sequence in the C-terminal section; belongs to the FPP/GGPP synthase family.

The catalysed reaction is 4 isopentenyl diphosphate + dimethylallyl diphosphate = (2E,6E,10E,14E)-geranylfarnesyl diphosphate + 4 diphosphate. It catalyses the reaction (2E,6E,10E,14E)-geranylfarnesyl diphosphate + H2O = preaspterpenacid acid I + diphosphate. It functions in the pathway secondary metabolite biosynthesis; terpenoid biosynthesis. Functionally, sesterterpenoid synthase; part of the gene cluster that mediates the biosynthesis of aspterpenacids. Performs both prenyl transferase and terpene cyclase activity, converting isopentenyl diphosphate and dimethylallyl diphosphate into geranylfarnesyl diphosphate (GFPP) and then converting GFPP into preaspterpenacid I. C22-oxidative modification of preaspterpenacid I by the cytochrome P450 monooxygenase sttB then leads to preaspterpenacid II. It has still to be determined how preaspterpenacid II is further modified to produce aspterpenacids. In Aspergillus terreus, this protein is Preaspterpenacid I synthase sttA.